Consider the following 267-residue polypeptide: MADS-box transcription factor 15 (267 aa).

In terms of domain architecture, MADS-box spans 1 to 61 (MGRGKVQLKR…GKLYEYATDS (61 aa)). One can recognise a K-box domain in the interval 88 to 178 (EGNWCHEYRK…QKELVERQKN (91 aa)). The tract at residues 179 to 215 (VRGQQQVGQWDQTQVQAQAQAQPQAQTSSSSSSMLRD) is disordered. Residues 182–215 (QQQVGQWDQTQVQAQAQAQPQAQTSSSSSSMLRD) are compositionally biased toward low complexity.

May interact with the K-box of MADS1 and MADS6.

It is found in the nucleus. In terms of biological role, probable transcription factor. This Oryza sativa subsp. japonica (Rice) protein is MADS-box transcription factor 15 (MADS15).